A 368-amino-acid chain; its full sequence is Cobalt-precorrin-5B C(1)-methyltransferase (368 aa).

The protein belongs to the CbiD family.

It carries out the reaction Co-precorrin-5B + S-adenosyl-L-methionine = Co-precorrin-6A + S-adenosyl-L-homocysteine. The protein operates within cofactor biosynthesis; adenosylcobalamin biosynthesis; cob(II)yrinate a,c-diamide from sirohydrochlorin (anaerobic route): step 6/10. Its function is as follows. Catalyzes the methylation of C-1 in cobalt-precorrin-5B to form cobalt-precorrin-6A. The sequence is that of Cobalt-precorrin-5B C(1)-methyltransferase from Brucella canis (strain ATCC 23365 / NCTC 10854 / RM-666).